Here is a 467-residue protein sequence, read N- to C-terminus: Sialic acid-binding Ig-like lectin 12 (467 aa).

The first 18 residues, 1–18, serve as a signal peptide directing secretion; that stretch reads MLLLLLLLLLWGIKGVEG. Topologically, residues 19-353 are extracellular; it reads QNPQEVFTLN…ATLSEMMMGT (335 aa). Residues 21–141 enclose the Ig-like V-type domain; sequence PQEVFTLNVE…TKYNYMWDKM (121 aa). Intrachain disulfides connect cysteine 40-cysteine 176, cysteine 45-cysteine 108, and cysteine 170-cysteine 219. A glycan (N-linked (GlcNAc...) asparagine) is linked at asparagine 46. Arginine 126 is an N-acetylneuraminate binding site. Ig-like C2-type domains follow at residues 152–239 and 242–339; these read PQIL…LNVS and PKNL…LSLS. Asparagine 167, asparagine 197, asparagine 216, asparagine 227, asparagine 237, asparagine 244, asparagine 262, asparagine 287, and asparagine 294 each carry an N-linked (GlcNAc...) asparagine glycan. Cysteine 278 and cysteine 323 form a disulfide bridge. A helical membrane pass occupies residues 354 to 374; it reads FVGSGVTALLFLSVCILLLAV. Residues 375-467 lie on the Cytoplasmic side of the membrane; that stretch reads RSYRRKPARP…IKFPQRTAWP (93 aa). The ITIM motif motif lies at 430 to 435; the sequence is IHYATL. Tyrosine 432 and tyrosine 455 each carry phosphotyrosine. The SLAM-like motif signature appears at 453-458; it reads TEYSEI.

Belongs to the immunoglobulin superfamily. SIGLEC (sialic acid binding Ig-like lectin) family. As to quaternary structure, homodimer; disulfide-linked. Interacts with PTPN6/SHP-1 and PTPN11/SHP-2 upon phosphorylation. Post-translationally, phosphorylation of Tyr-432 is required for binding to PTPN6 and PTPN11. Phosphorylation of Tyr-455 is involved in binding to PTPN6. Tyr-432 needs to be phosphorylated prior to Tyr-455. As to expression, expressed by monocytic/myeloid lineage cells. Found at higher levels in spleen, liver and heart. Found at lower levels in kidney and lung.

It is found in the membrane. Its function is as follows. Putative adhesion molecule that mediates sialic-acid dependent binding to cells. The sialic acid recognition site may be masked by cis interactions with sialic acids on the same cell surface. In the immune response, may act as an inhibitory receptor upon ligand induced tyrosine phosphorylation by recruiting cytoplasmic phosphatase(s) via their SH2 domain(s) that block signal transduction through dephosphorylation of signaling molecules. The chain is Sialic acid-binding Ig-like lectin 12 (Siglec12) from Mus musculus (Mouse).